A 510-amino-acid chain; its full sequence is Serine/threonine-protein kinase RIO3 (510 aa).

2 disordered regions span residues 100–126 (GSSSSVHFTPDRYHPKTMQETDSENED) and 143–191 (DEEN…DMVG). Composition is skewed to basic and acidic residues over residues 108 to 118 (TPDRYHPKTMQ) and 162 to 179 (TKHDTGVSGRRNADKTFN). In terms of domain architecture, Protein kinase spans 235-510 (LLLLKWINQG…RGISPAREYN (276 aa)). ATP-binding positions include 241–249 (INQGVFDSV) and Lys275. The Proton acceptor role is filled by Asp388. The segment covering 474-499 (RSVDLRHDKSRPADMELKKYNEEKKA) has biased composition (basic and acidic residues). The segment at 474–510 (RSVDLRHDKSRPADMELKKYNEEKKANRGISPAREYN) is disordered.

Belongs to the protein kinase superfamily. RIO-type Ser/Thr kinase family. Mg(2+) serves as cofactor. Expressed in tail neurons (PVQ and PHAL/PQR).

The enzyme catalyses L-seryl-[protein] + ATP = O-phospho-L-seryl-[protein] + ADP + H(+). It catalyses the reaction L-threonyl-[protein] + ATP = O-phospho-L-threonyl-[protein] + ADP + H(+). In Caenorhabditis elegans, this protein is Serine/threonine-protein kinase RIO3 (riok-3).